The following is a 296-amino-acid chain: Peroxidase P7 (296 aa).

Position 1 is a pyrrolidone carboxylic acid (Q1). Cystine bridges form between C11/C91, C44/C49, C97/C292, and C176/C201. H42 acts as the Proton acceptor in catalysis. Residues D43, V46, G48, D50, and S52 each contribute to the Ca(2+) site. Residue P139 coordinates substrate. H169 contributes to the heme b binding site. T170 contributes to the Ca(2+) binding site. The N-linked (GlcNAc...) asparagine glycan is linked to N185. Ca(2+)-binding residues include D216, S219, and D224.

Belongs to the peroxidase family. Classical plant (class III) peroxidase subfamily. Requires Ca(2+) as cofactor. Heme b serves as cofactor.

It carries out the reaction 2 a phenolic donor + H2O2 = 2 a phenolic radical donor + 2 H2O. Removal of H(2)O(2), oxidation of toxic reductants, biosynthesis and degradation of lignin, suberization, auxin catabolism, response to environmental stresses such as wounding, pathogen attack and oxidative stress. These functions might be dependent on each isozyme/isoform in each plant tissue. The polypeptide is Peroxidase P7 (Brassica rapa subsp. rapa (Turnip)).